We begin with the raw amino-acid sequence, 251 residues long: Methionine aminopeptidase (251 aa).

Substrate is bound at residue His76. A divalent metal cation-binding residues include Asp93, Asp104, and His168. Residue His175 participates in substrate binding. 2 residues coordinate a divalent metal cation: Glu202 and Glu233.

The protein belongs to the peptidase M24A family. Methionine aminopeptidase type 1 subfamily. In terms of assembly, monomer. The cofactor is Co(2+). Zn(2+) serves as cofactor. Requires Mn(2+) as cofactor. Fe(2+) is required as a cofactor.

It carries out the reaction Release of N-terminal amino acids, preferentially methionine, from peptides and arylamides.. Functionally, removes the N-terminal methionine from nascent proteins. The N-terminal methionine is often cleaved when the second residue in the primary sequence is small and uncharged (Met-Ala-, Cys, Gly, Pro, Ser, Thr, or Val). Requires deformylation of the N(alpha)-formylated initiator methionine before it can be hydrolyzed. This is Methionine aminopeptidase from Staphylococcus epidermidis (strain ATCC 12228 / FDA PCI 1200).